A 90-amino-acid chain; its full sequence is Conotoxin ba9a (90 aa).

Positions 1-27 (MHLSLARSAGLMWLLLFAVGNFVGVQP) are cleaved as a signal peptide. Residues 28-62 (GQITRDVDNGQLADNRRNLQSLRKPMTLFKSLNKR) constitute a propeptide that is removed on maturation. The residue at position 67 (Glu-67) is a 4-carboxyglutamate. 4-hydroxyproline is present on residues Pro-76 and Pro-80.

As to expression, expressed by the venom duct.

It localises to the secreted. The protein is Conotoxin ba9a of Conus bayani (Bayan's cone).